The chain runs to 332 residues: L-lactate dehydrogenase A chain (332 aa).

NAD(+)-binding positions include G29 to K57 and R99. Substrate is bound by residues R106, N138, and R169. An NAD(+)-binding site is contributed by N138. Residue H193 is the Proton acceptor of the active site. T248 serves as a coordination point for substrate.

This sequence belongs to the LDH/MDH superfamily. LDH family. In terms of assembly, homotetramer.

It localises to the cytoplasm. The catalysed reaction is (S)-lactate + NAD(+) = pyruvate + NADH + H(+). Its pathway is fermentation; pyruvate fermentation to lactate; (S)-lactate from pyruvate: step 1/1. In terms of biological role, interconverts simultaneously and stereospecifically pyruvate and lactate with concomitant interconversion of NADH and NAD(+). This Alligator mississippiensis (American alligator) protein is L-lactate dehydrogenase A chain (LDHA).